The sequence spans 362 residues: 3-isopropylmalate dehydrogenase (362 aa).

Residue 78–91 (GYKWDSLPPHQRPE) coordinates NAD(+). Substrate is bound by residues arginine 98, arginine 108, arginine 136, and aspartate 226. Mg(2+) is bound by residues aspartate 226, aspartate 250, and aspartate 254. 284–296 (GSAPDIAGLDKAN) serves as a coordination point for NAD(+).

The protein belongs to the isocitrate and isopropylmalate dehydrogenases family. LeuB type 1 subfamily. In terms of assembly, homodimer. Mg(2+) is required as a cofactor. The cofactor is Mn(2+).

It is found in the cytoplasm. It carries out the reaction (2R,3S)-3-isopropylmalate + NAD(+) = 4-methyl-2-oxopentanoate + CO2 + NADH. It participates in amino-acid biosynthesis; L-leucine biosynthesis; L-leucine from 3-methyl-2-oxobutanoate: step 3/4. Functionally, catalyzes the oxidation of 3-carboxy-2-hydroxy-4-methylpentanoate (3-isopropylmalate) to 3-carboxy-4-methyl-2-oxopentanoate. The product decarboxylates to 4-methyl-2 oxopentanoate. The sequence is that of 3-isopropylmalate dehydrogenase from Trichormus variabilis (strain ATCC 29413 / PCC 7937) (Anabaena variabilis).